Reading from the N-terminus, the 143-residue chain is Ribonuclease H (143 aa).

The RNase H type-1 domain occupies 1–136 (MQEIEIFCDG…CDSLAKLEAQ (136 aa)). Residues aspartate 9, glutamate 47, aspartate 69, and aspartate 128 each contribute to the Mg(2+) site.

Belongs to the RNase H family. Monomer. Mg(2+) is required as a cofactor.

It localises to the cytoplasm. The enzyme catalyses Endonucleolytic cleavage to 5'-phosphomonoester.. Functionally, endonuclease that specifically degrades the RNA of RNA-DNA hybrids. The polypeptide is Ribonuclease H (Helicobacter pylori (strain HPAG1)).